Reading from the N-terminus, the 412-residue chain is Tyrosine--tRNA ligase (412 aa).

Tyrosine 41 contacts L-tyrosine. Residues 46-55 (ATADSLHVGH) carry the 'HIGH' region motif. L-tyrosine is bound by residues tyrosine 174 and glutamine 178. The 'KMSKS' region motif lies at 234–238 (KMGKS). Residue lysine 237 coordinates ATP. One can recognise an S4 RNA-binding domain in the interval 348 to 411 (LSLTDLLLEH…KKQHLHLRLE (64 aa)).

This sequence belongs to the class-I aminoacyl-tRNA synthetase family. TyrS type 1 subfamily. In terms of assembly, homodimer.

The protein localises to the cytoplasm. The catalysed reaction is tRNA(Tyr) + L-tyrosine + ATP = L-tyrosyl-tRNA(Tyr) + AMP + diphosphate + H(+). Its function is as follows. Catalyzes the attachment of tyrosine to tRNA(Tyr) in a two-step reaction: tyrosine is first activated by ATP to form Tyr-AMP and then transferred to the acceptor end of tRNA(Tyr). This is Tyrosine--tRNA ligase from Pseudomonas aeruginosa (strain LESB58).